The chain runs to 811 residues: Glycerol-3-phosphate acyltransferase (811 aa).

The HXXXXD motif motif lies at 305–310 (CHRSHI).

It belongs to the GPAT/DAPAT family.

Its subcellular location is the cell inner membrane. The catalysed reaction is sn-glycerol 3-phosphate + an acyl-CoA = a 1-acyl-sn-glycero-3-phosphate + CoA. The protein operates within phospholipid metabolism; CDP-diacylglycerol biosynthesis; CDP-diacylglycerol from sn-glycerol 3-phosphate: step 1/3. The protein is Glycerol-3-phosphate acyltransferase of Histophilus somni (strain 129Pt) (Haemophilus somnus).